The sequence spans 42 residues: Photosystem II reaction center protein J (42 aa).

Residues 10-30 traverse the membrane as a helical segment; sequence IPLWLVGTVAGTAAIGLLGIF.

The protein belongs to the PsbJ family. PSII is composed of 1 copy each of membrane proteins PsbA, PsbB, PsbC, PsbD, PsbE, PsbF, PsbH, PsbI, PsbJ, PsbK, PsbL, PsbM, PsbT, PsbX, PsbY, PsbZ, Psb30/Ycf12, at least 3 peripheral proteins of the oxygen-evolving complex and a large number of cofactors. It forms dimeric complexes.

The protein localises to the plastid. It is found in the chloroplast thylakoid membrane. In terms of biological role, one of the components of the core complex of photosystem II (PSII). PSII is a light-driven water:plastoquinone oxidoreductase that uses light energy to abstract electrons from H(2)O, generating O(2) and a proton gradient subsequently used for ATP formation. It consists of a core antenna complex that captures photons, and an electron transfer chain that converts photonic excitation into a charge separation. This chain is Photosystem II reaction center protein J, found in Pleurastrum terricola (Filamentous green alga).